We begin with the raw amino-acid sequence, 359 residues long: tRNA-specific 2-thiouridylase MnmA (359 aa).

Residues 11–18 (GISGGVDS) and Ile37 contribute to the ATP site. Cys99 (nucleophile) is an active-site residue. Cysteines 99 and 195 form a disulfide. ATP is bound at residue Gly123. The tract at residues 145–147 (KDQ) is interaction with tRNA. Cys195 serves as the catalytic Cysteine persulfide intermediate. Residues 304-305 (RY) form an interaction with tRNA region.

The protein belongs to the MnmA/TRMU family.

It localises to the cytoplasm. The enzyme catalyses S-sulfanyl-L-cysteinyl-[protein] + uridine(34) in tRNA + AH2 + ATP = 2-thiouridine(34) in tRNA + L-cysteinyl-[protein] + A + AMP + diphosphate + H(+). Catalyzes the 2-thiolation of uridine at the wobble position (U34) of tRNA, leading to the formation of s(2)U34. The polypeptide is tRNA-specific 2-thiouridylase MnmA (Chlorobium phaeobacteroides (strain BS1)).